The sequence spans 291 residues: uncharacterized protein (291 aa).

This is an uncharacterized protein from Lymantria dispar multicapsid nuclear polyhedrosis virus (LdMNPV).